The chain runs to 371 residues: UDP-N-acetylglucosamine--N-acetylmuramyl-(pentapeptide) pyrophosphoryl-undecaprenol N-acetylglucosamine transferase (371 aa).

Residues 10–12 (TGG), Asn122, Arg166, Ser196, and Gln301 contribute to the UDP-N-acetyl-alpha-D-glucosamine site.

Belongs to the glycosyltransferase 28 family. MurG subfamily.

The protein resides in the cell inner membrane. It catalyses the reaction di-trans,octa-cis-undecaprenyl diphospho-N-acetyl-alpha-D-muramoyl-L-alanyl-D-glutamyl-meso-2,6-diaminopimeloyl-D-alanyl-D-alanine + UDP-N-acetyl-alpha-D-glucosamine = di-trans,octa-cis-undecaprenyl diphospho-[N-acetyl-alpha-D-glucosaminyl-(1-&gt;4)]-N-acetyl-alpha-D-muramoyl-L-alanyl-D-glutamyl-meso-2,6-diaminopimeloyl-D-alanyl-D-alanine + UDP + H(+). Its pathway is cell wall biogenesis; peptidoglycan biosynthesis. Functionally, cell wall formation. Catalyzes the transfer of a GlcNAc subunit on undecaprenyl-pyrophosphoryl-MurNAc-pentapeptide (lipid intermediate I) to form undecaprenyl-pyrophosphoryl-MurNAc-(pentapeptide)GlcNAc (lipid intermediate II). This is UDP-N-acetylglucosamine--N-acetylmuramyl-(pentapeptide) pyrophosphoryl-undecaprenol N-acetylglucosamine transferase from Halothermothrix orenii (strain H 168 / OCM 544 / DSM 9562).